Here is a 308-residue protein sequence, read N- to C-terminus: tRNA dimethylallyltransferase (308 aa).

Gly8 to Thr15 serves as a coordination point for ATP. Thr10–Thr15 serves as a coordination point for substrate. An interaction with substrate tRNA region spans residues Asp33 to Gln36.

It belongs to the IPP transferase family. In terms of assembly, monomer. Mg(2+) is required as a cofactor.

The enzyme catalyses adenosine(37) in tRNA + dimethylallyl diphosphate = N(6)-dimethylallyladenosine(37) in tRNA + diphosphate. Functionally, catalyzes the transfer of a dimethylallyl group onto the adenine at position 37 in tRNAs that read codons beginning with uridine, leading to the formation of N6-(dimethylallyl)adenosine (i(6)A). In Kosmotoga olearia (strain ATCC BAA-1733 / DSM 21960 / TBF 19.5.1), this protein is tRNA dimethylallyltransferase.